The chain runs to 2136 residues: Protein CELLULOSE SYNTHASE INTERACTIVE 3 (2136 aa).

ARM repeat units follow at residues 27 to 66, 71 to 111, 113 to 152, 159 to 201, 204 to 243, 246 to 286, 289 to 337, 376 to 417, 419 to 458, 461 to 500, 503 to 542, 545 to 584, 586 to 618, 619 to 663, 666 to 705, 711 to 750, 752 to 791, 811 to 848, 849 to 887, 936 to 980, 1013 to 1041, 1042 to 1083, 1109 to 1149, 1163 to 1204, 1207 to 1247, 1249 to 1288, 1290 to 1329, 1333 to 1375, 1377 to 1416, 1418 to 1457, 1460 to 1499, 1518 to 1546, 1547 to 1585, 1587 to 1626, 1628 to 1669, 1670 to 1704, 1710 to 1750, 1790 to 1833, 1836 to 1875, 1921 to 1960, 1969 to 2008, and 2010 to 2035; these read MEMD…LLGI, REAR…VLCK, KDLR…EVSS, HIGM…NLCG, DGYW…RLVL, CDSI…ALSA, DEAK…NVFG, PESS…SLYG, SSLS…GLCH, VGIW…ILTA, DDSK…NLCC, EEIR…KLVH, ADPA…HVLS, KASQ…DLFS, QDIC…ALSR, NNKK…NLLS, PDIA…QLLK, SLVD…FSYP, PWIA…RLCS, QLIT…GFLE, SVDA…YTSS, AQAE…TLAV, RGIN…SLVK, EDVR…RIAD, DTNK…VLFS, HELR…ELFD, ENIR…KLSS, SNTA…VVFS, KNIR…ILLD, EQHL…KLGK, VPRK…ILTN, AVLL…KQQT, LEAF…HFLT, EDFQ…KISA, WPKA…NILQ, YDAE…ALML, ASST…NNPR, SQHE…NFVM, RTNR…FLFS, PKLR…LLRH, VAKS…CLPG, and LTVN…QLTI. One can recognise a C2 domain in the interval 1989–2106; the sequence is KTCPPRFHDK…VTEGEYSGSL (118 aa).

Associates with cellulase synthase (CESA) complexes. Binds to cortical microtubules. Interacts with CESA3 and CESA6. Expressed in dark-grown hypocotyls, leaves (confined to vasculature and trichomes), stamen, pollen, developing siliques, and roots. Restricted in meristematic tissue of the shoot and root. Present in distinct punctae at the cell cortex, called microtubule-associated cellulose synthase compartments, that move with constant velocities of 10 to 3000 nm/min.

The protein localises to the cell membrane. It is found in the cytoplasm. The protein resides in the cytoskeleton. It localises to the endomembrane system. Regulator of the microtubular cytoskeleton. Microtubule-associated protein involved in the association of cellulase synthase (CESA) complexes (CSCs) and cortical microtubules. Promotes dynamics of CSCs in the plasma membrane in both microtubules-dependent and microtubules-independent manners. Regulates primary cell wall biosynthesis and cellulose microfibrils organization. This Arabidopsis thaliana (Mouse-ear cress) protein is Protein CELLULOSE SYNTHASE INTERACTIVE 3.